The primary structure comprises 393 residues: Homoserine O-succinyltransferase (393 aa).

One can recognise an AB hydrolase-1 domain in the interval Asn-62–Asp-372. Residue Ser-168 is the Nucleophile of the active site. Arg-238 provides a ligand contact to substrate. Catalysis depends on residues Asp-333 and His-366. Asp-367 lines the substrate pocket.

This sequence belongs to the AB hydrolase superfamily. MetX family. As to quaternary structure, homodimer.

Its subcellular location is the cytoplasm. The enzyme catalyses L-homoserine + succinyl-CoA = O-succinyl-L-homoserine + CoA. The protein operates within amino-acid biosynthesis; L-methionine biosynthesis via de novo pathway; O-succinyl-L-homoserine from L-homoserine: step 1/1. In terms of biological role, transfers a succinyl group from succinyl-CoA to L-homoserine, forming succinyl-L-homoserine. The protein is Homoserine O-succinyltransferase of Cupriavidus taiwanensis (strain DSM 17343 / BCRC 17206 / CCUG 44338 / CIP 107171 / LMG 19424 / R1) (Ralstonia taiwanensis (strain LMG 19424)).